A 622-amino-acid polypeptide reads, in one-letter code: Cilia- and flagella-associated protein 206 (622 aa).

Residues 568 to 593 (NTSQVYPLKEASTQSKREGSSRVPRP) are disordered.

Belongs to the CFAP206 family. In terms of tissue distribution, expressed in the sperm, oviduct, lung, nasal cavity, brain ependyma and choroid plexus.

It is found in the cytoplasm. It localises to the cytoskeleton. Its subcellular location is the cilium axoneme. The protein localises to the cilium basal body. Essential for sperm motility and is involved in the regulation of the beating frequency of motile cilia on the epithelial cells of the respiratory tract. Required for the establishment of radial spokes in sperm flagella. This chain is Cilia- and flagella-associated protein 206, found in Mus musculus (Mouse).